Here is a 191-residue protein sequence, read N- to C-terminus: Ribosome maturation factor RimM (191 aa).

Positions 107–184 constitute a PRC barrel domain; that stretch reads EDDEWHQDDL…LVLVSPPPGL (78 aa).

The protein belongs to the RimM family. Binds ribosomal protein uS19.

Its subcellular location is the cytoplasm. Functionally, an accessory protein needed during the final step in the assembly of 30S ribosomal subunit, possibly for assembly of the head region. Essential for efficient processing of 16S rRNA. May be needed both before and after RbfA during the maturation of 16S rRNA. It has affinity for free ribosomal 30S subunits but not for 70S ribosomes. This chain is Ribosome maturation factor RimM, found in Kocuria rhizophila (strain ATCC 9341 / DSM 348 / NBRC 103217 / DC2201).